The following is a 120-amino-acid chain: Aspartate 1-decarboxylase (120 aa).

Ser-24 functions as the Schiff-base intermediate with substrate; via pyruvic acid in the catalytic mechanism. Ser-24 carries the pyruvic acid (Ser) modification. Thr-56 is a substrate binding site. Tyr-57 serves as the catalytic Proton donor. Position 70–72 (70–72 (GAA)) interacts with substrate.

The protein belongs to the PanD family. As to quaternary structure, heterooctamer of four alpha and four beta subunits. Pyruvate is required as a cofactor. In terms of processing, is synthesized initially as an inactive proenzyme, which is activated by self-cleavage at a specific serine bond to produce a beta-subunit with a hydroxyl group at its C-terminus and an alpha-subunit with a pyruvoyl group at its N-terminus.

Its subcellular location is the cytoplasm. The enzyme catalyses L-aspartate + H(+) = beta-alanine + CO2. It functions in the pathway cofactor biosynthesis; (R)-pantothenate biosynthesis; beta-alanine from L-aspartate: step 1/1. In terms of biological role, catalyzes the pyruvoyl-dependent decarboxylation of aspartate to produce beta-alanine. The protein is Aspartate 1-decarboxylase of Pyrobaculum islandicum (strain DSM 4184 / JCM 9189 / GEO3).